Reading from the N-terminus, the 199-residue chain is Achaete-scute homolog 1 (199 aa).

Residues 37 to 56 (PAEEQQASKAKPIKRQRSAS) form a disordered region. The bHLH domain occupies 81-133 (AAVARRNERERNRVKLVNLGFATLREHVPNGAANKKMSKVETLRSAVEYIRAL). Positions 162 to 179 (HDMNSMAGSPVSSYSSDE) are enriched in polar residues. The disordered stretch occupies residues 162-189 (HDMNSMAGSPVSSYSSDEGSYDPLSPEE).

Efficient DNA binding requires dimerization with another bHLH protein. As to expression, neuronal precursor cells.

It is found in the nucleus. Its function is as follows. Transcription factor that plays a key role in neuronal differentiation: acts as a pioneer transcription factor, accessing closed chromatin to allow other factors to bind and activate neural pathways. Directly binds the E box motif (5'-CANNTG-3') on promoters and promotes transcription of neuronal genes. The combination of three transcription factors, ASCL1, POU3F2/BRN2 and MYT1L, is sufficient to reprogram fibroblasts and other somatic cells into induced neuronal (iN) cells in vitro. This chain is Achaete-scute homolog 1 (ascl1), found in Xenopus laevis (African clawed frog).